The chain runs to 1182 residues: Tyrosine-protein kinase ABL2 (1182 aa).

Positions Met1–Ala42 are disordered. Residue Gly2 is the site of N-myristoyl glycine attachment. The segment at Gly2 to Glu106 is CAP. Residues Arg20 to Pro30 show a composition bias toward low complexity. Ser97 carries the phosphoserine modification. Residues Ser107–Ser167 enclose the SH3 domain. Phosphotyrosine occurs at positions 116, 161, 174, 185, 218, and 231. The SH2 domain occupies Trp173–Ala263. Phosphotyrosine; by ABL1 and autocatalysis is present on Tyr261. Tyr272 carries the phosphotyrosine; by autocatalysis modification. The residue at position 275 (Ser275) is a Phosphoserine. A Protein kinase domain is found at Ile288–Phe539. Residue Leu294 to Val302 coordinates ATP. Phosphotyrosine is present on residues Tyr299 and Tyr303. Residues Lys317 and Glu362 to Asn368 each bind ATP. Residue Asp409 is the Proton acceptor of the active site. A Kinase activation loop motif is present at residues Asp427–Trp451. A Phosphotyrosine; by autocatalysis and SRC-type Tyr-kinases modification is found at Tyr439. Tyr459 carries the phosphotyrosine modification. Residue Tyr568 is modified to Phosphotyrosine; by autocatalysis. Residues Ser606, Ser621, Ser632, Ser634, and Ser656 each carry the phosphoserine modification. Disordered stretches follow at residues Ile612–Glu642 and Ser655–Arg674. Residues Lys659–Arg661 carry the Nuclear localization signal motif. Phosphoserine occurs at positions 670, 671, and 672. Phosphotyrosine; by autocatalysis is present on Tyr684. The segment at Ser695–Lys930 is F-actin-binding. Tyr719 is modified (phosphotyrosine). The disordered stretch occupies residues Leu765–Gln796. Lys778 is subject to N6-acetyllysine. The segment covering Arg782 to Leu793 has biased composition (polar residues). Ser785 is subject to Phosphoserine. Position 802 is a phosphothreonine (Thr802). Positions Arg809–Glu825 are enriched in polar residues. Residues Arg809–Gly858 are disordered. Phosphoserine is present on residues Ser819 and Ser822. Residues Asn827–Lys851 show a composition bias toward basic and acidic residues. Residues Ser915 and Ser936 each carry the phosphoserine modification. Residues His964–Ala1059 form a disordered region. An F-actin-binding region spans residues Glu1020–Arg1182.

The protein belongs to the protein kinase superfamily. Tyr protein kinase family. ABL subfamily. As to quaternary structure, interacts with PSMA7. Interacts with CTTN. Found in a complex with ABL1, ABL2, CRK and UNC119; leading to the inhibition of CRK phosphorylation by ABL kinases. It depends on Mg(2+) as a cofactor. Mn(2+) serves as cofactor. In terms of processing, phosphorylated at Tyr-261 by ABL1 in response to oxidative stress. Phosphorylated by PDGFRB. Post-translationally, polyubiquitinated. Polyubiquitination of ABL2 leads to degradation. Most abundant in adult mouse brain, especially in synapse-rich regions.

It is found in the cytoplasm. The protein resides in the cytoskeleton. The catalysed reaction is L-tyrosyl-[protein] + ATP = O-phospho-L-tyrosyl-[protein] + ADP + H(+). Its activity is regulated as follows. Stabilized in the inactive form by an association between the SH3 domain and the SH2-TK linker region, interactions of the N-terminal cap, and contributions from an N-terminal myristoyl group and phospholipids. Activated by autophosphorylation as well as by SRC-family kinase-mediated phosphorylation. Activated by RIN1 binding to the SH2 and SH3 domains. Inhibited by imatinib mesylate (Gleevec). Phosphatidylinositol 4,5-bisphosphate (PIP2), a highly abundant phosphoinositide known to regulate cytoskeletal and membrane proteins, inhibits the tyrosine kinase activity. Non-receptor tyrosine-protein kinase that plays an ABL1-overlapping role in key processes linked to cell growth and survival such as cytoskeleton remodeling in response to extracellular stimuli, cell motility and adhesion, receptor endocytosis, autophagy, DNA damage response and apoptosis. Coordinates actin remodeling through tyrosine phosphorylation of proteins controlling cytoskeleton dynamics like MYH10 (involved in movement); CTTN (involved in signaling); or TUBA1 and TUBB (microtubule subunits). Binds directly F-actin and regulates actin cytoskeletal structure through its F-actin-bundling activity. Involved in the regulation of cell adhesion and motility through phosphorylation of key regulators of these processes such as CRK, CRKL or DOK1. Required for adhesion-dependent phosphorylation of ARHGAP35 which promotes its association with RASA1, resulting in recruitment of ARHGAP35 to the cell periphery where it inhibits RHO. Phosphorylates multiple receptor tyrosine kinases like PDGFRB and other substrates which are involved in endocytosis regulation such as RIN1. In brain, may regulate neurotransmission by phosphorylating proteins at the synapse. Finally, functions as its own regulator through autocatalytic activity as well as through phosphorylation of its inhibitor, ABI1. Positively regulates chemokine-mediated T-cell migration, polarization, and homing to lymph nodes and immune-challenged tissues, potentially via activation of NEDD9/HEF1 and RAP1. The sequence is that of Tyrosine-protein kinase ABL2 from Mus musculus (Mouse).